The primary structure comprises 489 residues: Phosphoglucosamine mutase (489 aa).

Residue Ser-136 is the Phosphoserine intermediate of the active site. 4 residues coordinate Mg(2+): Ser-136, Asp-275, Asp-277, and Asp-279. Ser-136 carries the post-translational modification Phosphoserine.

The protein belongs to the phosphohexose mutase family. It depends on Mg(2+) as a cofactor. Activated by phosphorylation.

It catalyses the reaction alpha-D-glucosamine 1-phosphate = D-glucosamine 6-phosphate. In terms of biological role, catalyzes the conversion of glucosamine-6-phosphate to glucosamine-1-phosphate. The protein is Phosphoglucosamine mutase of Trichodesmium erythraeum (strain IMS101).